The following is a 114-amino-acid chain: Adapter SH3BGRL (114 aa).

The required for interaction with HER2 stretch occupies residues 13–50 (STAIKKKQQDVLGFLEANKIGFEEKDIAANEENRKWMR). The tract at residues 54 to 71 (PENSRPATGYPLPPQIFN) is required for interaction with PFN1, HER2, and ATG12. Residues 61–67 (TGYPLPP) carry the SH3-binding motif.

The protein belongs to the SH3BGR family. In terms of assembly, monomer. Interacts with PFN1/Profilin-1. Interacts with ERBB2. Interacts with ATG12. Interacts with BECN1. Interacts with translating ribosomes. Ubiquitous.

It is found in the cytoplasm. The protein resides in the cytosol. It localises to the cell membrane. Functionally, appears to function as an adapter protein that bridges proteins together or proteins with mRNAs. May function as a ubiquitin ligase-substrate adapter. Additionally, associates with translating cytoplasmic ribosomes and may promote the expression of specific mRNAs. The chain is Adapter SH3BGRL from Homo sapiens (Human).